Here is an 830-residue protein sequence, read N- to C-terminus: Periplasmic nitrate reductase 2 (830 aa).

Positions 1-31 (MKVSRRKFIKAQAVASAAAAAGISIPISASN) form a signal peptide, tat-type signal. The region spanning 41-97 (ITWEKAPCRFCGTGCSVNVGTKEGKVVATHGDIKSPVNRGLNCVKGYFLSKIMYGKD) is the 4Fe-4S Mo/W bis-MGD-type domain. [4Fe-4S] cluster contacts are provided by C48, C51, C55, and C83. Mo-bis(molybdopterin guanine dinucleotide) contacts are provided by residues K85, Q152, N177, C181, 245-249 (STFEH), 264-266 (QSD), M374, Q378, N484, 510-511 (SE), K533, D560, and 720-729 (TGRVIEHWHS). W796 provides a ligand contact to substrate. Residues N804 and K821 each contribute to the Mo-bis(molybdopterin guanine dinucleotide) site.

It belongs to the prokaryotic molybdopterin-containing oxidoreductase family. NasA/NapA/NarB subfamily. As to quaternary structure, component of the periplasmic nitrate reductase NapAB complex composed of NapA and NapB. Requires [4Fe-4S] cluster as cofactor. Mo-bis(molybdopterin guanine dinucleotide) is required as a cofactor. Predicted to be exported by the Tat system. The position of the signal peptide cleavage has not been experimentally proven.

It localises to the periplasm. It catalyses the reaction 2 Fe(II)-[cytochrome] + nitrate + 2 H(+) = 2 Fe(III)-[cytochrome] + nitrite + H2O. Catalytic subunit of the periplasmic nitrate reductase complex NapAB. Receives electrons from NapB and catalyzes the reduction of nitrate to nitrite. The chain is Periplasmic nitrate reductase 2 from Photobacterium profundum (strain SS9).